We begin with the raw amino-acid sequence, 283 residues long: Pantothenate synthetase (283 aa).

An ATP-binding site is contributed by 31–38 (MGALHDGH). H38 serves as the catalytic Proton donor. Q62 is a (R)-pantoate binding site. A beta-alanine-binding site is contributed by Q62. Residue 148–151 (GKKD) coordinates ATP. A (R)-pantoate-binding site is contributed by Q154. Residues V177 and 185-188 (KSSR) each bind ATP.

It belongs to the pantothenate synthetase family. In terms of assembly, homodimer.

The protein resides in the cytoplasm. The enzyme catalyses (R)-pantoate + beta-alanine + ATP = (R)-pantothenate + AMP + diphosphate + H(+). Its pathway is cofactor biosynthesis; (R)-pantothenate biosynthesis; (R)-pantothenate from (R)-pantoate and beta-alanine: step 1/1. Its function is as follows. Catalyzes the condensation of pantoate with beta-alanine in an ATP-dependent reaction via a pantoyl-adenylate intermediate. This is Pantothenate synthetase from Staphylococcus aureus (strain Mu3 / ATCC 700698).